Reading from the N-terminus, the 134-residue chain is D-ribose pyranase (134 aa).

Residue His-20 is the Proton donor of the active site. Substrate is bound by residues Asp-28, His-99, and 123-125 (FSN).

This sequence belongs to the RbsD / FucU family. RbsD subfamily. In terms of assembly, homodecamer.

The protein resides in the cytoplasm. The enzyme catalyses beta-D-ribopyranose = beta-D-ribofuranose. It participates in carbohydrate metabolism; D-ribose degradation; D-ribose 5-phosphate from beta-D-ribopyranose: step 1/2. Catalyzes the interconversion of beta-pyran and beta-furan forms of D-ribose. The chain is D-ribose pyranase from Staphylococcus epidermidis (strain ATCC 12228 / FDA PCI 1200).